Consider the following 787-residue polypeptide: tRNA ligase 1 (787 aa).

The N6-AMP-lysine intermediate role is filled by Lys117.

This sequence belongs to the TRL1 family.

Its subcellular location is the cytoplasm. It carries out the reaction ATP + (ribonucleotide)n-3'-hydroxyl + 5'-phospho-(ribonucleotide)m = (ribonucleotide)n+m + AMP + diphosphate.. Functionally, required for the splicing of precursor tRNA molecules containing introns. The ligation activity requires three enzymatic activities: phosphorylation of the 5' terminus of the 3' half-tRNA in the presence of ATP, opening of the 2'3'-cyclic phosphodiester bond of the 5' half-tRNA leaving a 2'-phosphomonoester and ligation of the two tRNA halves in an ATP-dependent reaction. The polypeptide is tRNA ligase 1 (trl1) (Schizosaccharomyces pombe (strain 972 / ATCC 24843) (Fission yeast)).